Here is a 449-residue protein sequence, read N- to C-terminus: MGLLLLLSLLSACFQPRYAPTWDSLDQRPLPSWYDEAKFGIFMHWGVFSVPSFGSEWFWWDWKGAHDQNFIKDFMKRNYPPGFRYADFAPMFTAEWYNPLQWAEVLQASGAKYVVLTSKHHEGFTNWPSKYSWNWNSVDNGPHRDLVGELAMAIRNNSDLHFGLYYSLFEWFHPLYLKDKQNKWTTQDYTKDVGLAELYELVNAYHPEVVWSDGDWEAPYTYWNSTNFLAWLYNDSPVKDTVVTNDRWGSGMLCHHGGYYTCSDRYNPGVLQKHKWENCMTIDKKSWGFRREATLADYLDMDDLVKILAETVSCGGNLLMNIGPTHDGRIVPIFEERLRSMGKWLQVNGDAIYATKPWRAQNDTRESGVWYTSKNDSVYAIVLDWPNSGQLTLGVPRSSPTTTVTMLGWAAPLKWVAVSGSGITVQMPTASSNQLPCQWAWVIRMKGVM.

The N-terminal stretch at 1-19 (MGLLLLLSLLSACFQPRYA) is a signal peptide. Asn-156, Asn-224, Asn-362, and Asn-375 each carry an N-linked (GlcNAc...) asparagine glycan.

The protein belongs to the glycosyl hydrolase 29 family. Homotetramer.

The protein resides in the secreted. The enzyme catalyses an alpha-L-fucoside + H2O = L-fucose + an alcohol. Alpha-L-fucosidase is responsible for hydrolyzing the alpha-1,6-linked fucose joined to the reducing-end N-acetylglucosamine of the carbohydrate moieties of glycoproteins. This Branchiostoma floridae (Florida lancelet) protein is Alpha-L-fucosidase.